The chain runs to 388 residues: Chitinase 4 (388 aa).

The region spanning 22-375 is the GH18 domain; the sequence is FKTCVYFSNW…KNFVDQLGGV (354 aa). Residues N30 and N82 are each glycosylated (N-linked (GlcNAc...) asparagine). Chitin contacts are provided by residues 82-83 and 109-112; these read NQ and GGWG. Residues N123 and N132 are each glycosylated (N-linked (GlcNAc...) asparagine). The Proton donor role is filled by E151. Y152 is a binding site for chitin. An N-linked (GlcNAc...) asparagine glycan is attached at N155. 208 to 211 provides a ligand contact to chitin; that stretch reads MCYD. An N-linked (GlcNAc...) asparagine glycan is attached at N237. A chitin-binding site is contributed by W350.

This sequence belongs to the glycosyl hydrolase 18 family. Chitinase class V subfamily.

Its subcellular location is the secreted. The catalysed reaction is Random endo-hydrolysis of N-acetyl-beta-D-glucosaminide (1-&gt;4)-beta-linkages in chitin and chitodextrins.. Chitinase involved in the remodeling of chitin in the fungal cell wall. Plays a role in sporulation. The chain is Chitinase 4 (CHT4) from Candida albicans (strain SC5314 / ATCC MYA-2876) (Yeast).